Consider the following 317-residue polypeptide: Methyltransferase CPUR_05424 (317 aa).

A methyltransferase domain region spans residues Asp-57 to Cys-149.

The protein belongs to the methyltransferase superfamily.

It participates in pigment biosynthesis. In terms of biological role, methyltransferase; part of the ergochrome gene cluster responsible for the typical purple-black color of the ergot sclerotia. The ergochrome gene cluster produces several ergot pigments including the yellow ergochrome secalonic acid and its derivatives, as well as the red anthraquinones endocrocin and clavorubin. The pathway begins with the synthesis of atrochrysone thioester by the polyketide synthase (PKS) CPUR_05437. The atrochrysone carboxyl ACP thioesterase CPUR_05436 then breaks the thioester bond and releases the atrochrysone carboxylic acid from CPUR_05437. The atrochrysone carboxylic acid is then converted to atrochrysone which is further transformed into emodin anthrone. The next step is performed by the anthrone oxygenase CPUR_05434 that catalyzes the oxidation of emodinanthrone to emodin. Emodin is further modified to yield monodictyphenone via several steps involving CPUR_05427, CPUR_05428, CPUR_05429 and CPUR_05430. The short chain dehydrogenase/reductase CPUR_05418 then catalyzes the C-5 ketoreduction to give the xanthone skeleton of the monomeric units. Ergochromes formation requires further dimerization steps of different xanthone units, probably catalyzed by the cytochrome P450 monooxygenase CPUR_05419. CPUR_05425, CPUR_05426 and CPUR_05431 are unique to Claviceps, thus it is likely that they are involved in further modification of xanthone units or in their dimerization. The yellow ergochromes and the red anthraquinone pigments endocrocin and clavorubin are products from the same PKS derived precursors and the latter are likely shunt products in the pathway of xanthone biosynthesis. It is proposed that atrochrysone carboxylic acid released from the PKS CPUR_05437 can also be converted to endocrocin anthrone which is further oxidized into endocrocin by CPUR_05435. Endocrocin could be then modified to clavorubin, possibly by CPUR_05423 and CPUR_05431. Clavorubin is the principal anthraquinone metabolite produced by the cluster with a much higher yield compared to endocrocin. In Claviceps purpurea (strain 20.1) (Ergot fungus), this protein is Methyltransferase CPUR_05424.